The primary structure comprises 1872 residues: E3 ubiquitin-protein ligase UBR2 (1872 aa).

A UBR-type zinc finger spans residues 96 to 172; that stretch reads TACTRLCFPS…DAFKCKNELN (77 aa). A Glycyl lysine isopeptide (Lys-Gly) (interchain with G-Cter in ubiquitin) cross-link involves residue lysine 709. The tract at residues 1134–1240 is interaction with UBC2; the sequence is RYLMETAPHV…SSNTINSCCD (107 aa). Residues 1203 to 1227 are disordered; the sequence is NNSVDTSDISTPRTTSPSLSPTRIN. Residues 1212–1225 are compositionally biased toward low complexity; it reads STPRTTSPSLSPTR. Phosphoserine occurs at positions 1218 and 1222. An RING-type; atypical zinc finger spans residues 1241-1362; that stretch reads DDCVFCKMPK…GLIYCPVCNS (122 aa).

The protein belongs to the E3 ubiquitin-protein ligase UBR1-like family. As to quaternary structure, interacts with MUB1, RPN4 and UBC2.

It localises to the cytoplasm. It carries out the reaction S-ubiquitinyl-[E2 ubiquitin-conjugating enzyme]-L-cysteine + [acceptor protein]-L-lysine = [E2 ubiquitin-conjugating enzyme]-L-cysteine + N(6)-ubiquitinyl-[acceptor protein]-L-lysine.. The protein operates within protein modification; protein ubiquitination. In terms of biological role, E3 ubiquitin-protein ligase which probably functions outside the N-end rule pathway, since it lacks the residues essential for the degradation of N-end rule substrates. Mediates RPN4 ubiquitination and subsequent degradation. The sequence is that of E3 ubiquitin-protein ligase UBR2 (UBR2) from Saccharomyces cerevisiae (strain ATCC 204508 / S288c) (Baker's yeast).